The primary structure comprises 484 residues: Solute carrier family 40 member 1 (484 aa).

11 consecutive transmembrane segments (helical) span residues 58–78 (LLTA…GPIV), 94–114 (WLLL…ALLV), 123–143 (GFPA…LAAL), 189–209 (VLSG…ALAA), 212–232 (LAAV…FPAL), 279–299 (VVLP…FGTL), 308–328 (GIPA…GIAA), 346–366 (LWSI…VWAG), 377–397 (LMGG…AVMQ), 413–433 (GVQN…GIIV), and 442–462 (LIVL…MHVY).

It belongs to the ferroportin (FP) (TC 2.A.100) family. SLC40A subfamily.

It is found in the membrane. May be involved in iron transport and iron homeostasis. The chain is Solute carrier family 40 member 1 from Oryza sativa subsp. japonica (Rice).